Reading from the N-terminus, the 151-residue chain is Mediator of RNA polymerase II transcription subunit 31 (151 aa).

Positions 1 to 18 (MEQPPPADQPQQPPPPTL) are enriched in pro residues. Disordered regions lie at residues 1–20 (MEQP…TLTN) and 131–151 (AEPV…AKAS).

Belongs to the Mediator complex subunit 31 family. Component of the Mediator complex.

It is found in the nucleus. Functionally, component of the Mediator complex, a coactivator involved in the regulated transcription of nearly all RNA polymerase II-dependent genes. Mediator functions as a bridge to convey information from gene-specific regulatory proteins to the basal RNA polymerase II transcription machinery. Mediator is recruited to promoters by direct interactions with regulatory proteins and serves as a scaffold for the assembly of a functional preinitiation complex with RNA polymerase II and the general transcription factors. This is Mediator of RNA polymerase II transcription subunit 31 (soh1) from Aspergillus niger (strain ATCC MYA-4892 / CBS 513.88 / FGSC A1513).